A 295-amino-acid chain; its full sequence is Diaminopimelate epimerase (295 aa).

N11 and N67 together coordinate substrate. C76 serves as the catalytic Proton donor. Substrate is bound by residues 77–78 (GN), N171, N210, and 228–229 (ER). Catalysis depends on C237, which acts as the Proton acceptor. 238 to 239 (GT) serves as a coordination point for substrate.

Belongs to the diaminopimelate epimerase family. Homodimer.

Its subcellular location is the cytoplasm. It catalyses the reaction (2S,6S)-2,6-diaminopimelate = meso-2,6-diaminopimelate. Its pathway is amino-acid biosynthesis; L-lysine biosynthesis via DAP pathway; DL-2,6-diaminopimelate from LL-2,6-diaminopimelate: step 1/1. In terms of biological role, catalyzes the stereoinversion of LL-2,6-diaminopimelate (L,L-DAP) to meso-diaminopimelate (meso-DAP), a precursor of L-lysine. This Methanocaldococcus jannaschii (strain ATCC 43067 / DSM 2661 / JAL-1 / JCM 10045 / NBRC 100440) (Methanococcus jannaschii) protein is Diaminopimelate epimerase.